The following is a 199-amino-acid chain: Recombination protein RecR (199 aa).

Residues 56–71 (CRSCFNVAQSELCRIC) form a C4-type zinc finger. In terms of domain architecture, Toprim spans 79–174 (SSICVVEEPK…KVTRLASGLP (96 aa)).

It belongs to the RecR family.

Its function is as follows. May play a role in DNA repair. It seems to be involved in an RecBC-independent recombinational process of DNA repair. It may act with RecF and RecO. The chain is Recombination protein RecR from Frankia casuarinae (strain DSM 45818 / CECT 9043 / HFP020203 / CcI3).